A 326-amino-acid polypeptide reads, in one-letter code: tRNA-dihydrouridine(20a/20b) synthase [NAD(P)+] (326 aa).

Residues 26–28 (PMV) and glutamine 79 each bind FMN. Cysteine 108 serves as the catalytic Proton donor. FMN is bound by residues lysine 149, histidine 177, 208-210 (NGD), and 232-233 (AR).

It belongs to the Dus family. Dus4 subfamily. It depends on FMN as a cofactor.

The protein localises to the mitochondrion. It carries out the reaction 5,6-dihydrouridine(20a) in tRNA + NADP(+) = uridine(20a) in tRNA + NADPH + H(+). It catalyses the reaction 5,6-dihydrouridine(20a) in tRNA + NAD(+) = uridine(20a) in tRNA + NADH + H(+). The catalysed reaction is 5,6-dihydrouridine(20b) in tRNA + NAD(+) = uridine(20b) in tRNA + NADH + H(+). The enzyme catalyses 5,6-dihydrouridine(20b) in tRNA + NADP(+) = uridine(20b) in tRNA + NADPH + H(+). It carries out the reaction a 5,6-dihydrouridine in mRNA + NAD(+) = a uridine in mRNA + NADH + H(+). It catalyses the reaction a 5,6-dihydrouridine in mRNA + NADP(+) = a uridine in mRNA + NADPH + H(+). Catalyzes the synthesis of dihydrouridine, a modified base found in the D-loop of most tRNAs. Also able to mediate dihydrouridylation of some mRNAs, thereby affecting their translation. The protein is tRNA-dihydrouridine(20a/20b) synthase [NAD(P)+] of Schizosaccharomyces pombe (strain 972 / ATCC 24843) (Fission yeast).